The sequence spans 442 residues: 4-alpha-glucanotransferase (442 aa).

5 residues coordinate Ca(2+): Asp-13, Asn-15, Asp-17, Val-19, and Asp-21. The active-site Nucleophile is the Asp-186. The active-site Proton donor is Glu-216.

Belongs to the glycosyl hydrolase 13 family. Monomer. The cofactor is Ca(2+).

Its subcellular location is the cytoplasm. The enzyme catalyses Transfers a segment of a (1-&gt;4)-alpha-D-glucan to a new position in an acceptor, which may be glucose or a (1-&gt;4)-alpha-D-glucan.. In terms of biological role, hydrolyzes the 1,4-alpha-glycoside bonds in oligomeric and polymeric 1,4-alpha-glucans and transfers oligosaccharides (maltotriose being the shortest one) to acceptor maltodextrins. The protein is 4-alpha-glucanotransferase (mgtA) of Thermotoga neapolitana.